The following is a 1265-amino-acid chain: MECPVMETGSLFTSGIKRHLKDKRISKTTKLNVSLASKIKTKILNNSSIFKISLKHNNRALAQALSREKENSRRITTEKMLLQKEVEKLNFENTFLRLKLNNLNKKLIDIEALMNNNLITAIEMSSLSEFHQSSFLLSASKKKRISKQCKLMRLPFARVPLTSNDDEDEDKEKMQCDNNIKSKTLPDIPSSGSTTQPLSTQDNSEVLFLKENNQNVYGLDDSEHISSIVDVPPRESHSHSDQSSKTSLMSEMRNAQSIGRRWEKPSPSNVTERKKRGSSWESNNLSADTPCATVLDKQHISSPELNCNNEINGHTNETNTEMQRNKQDLPGLSSESAREPNAECMNQIEDNDDFQLQKTVYDADMDLTASEVSKIVTVSTGIKKKSNKKTNEHGMKTFRKVKDSSSEKKRERSKRQFKNSSDVDIGEKIENRTERSDVLDGKRGAEDPGFIFNNEQLAQMNEQLAQVNELKKMTLQTGFEQGDRENVLCNKKEKRITNEQEETYSLSQSSGKFHQESKFDKGQNSLTCNKSKASRQTFVIHKLEKDNLLPNQKDKVTIYENLDVTNEFHTANLSTKDNGNLCDYGTHNILDLKKYVTDIQPSEQNESNINKLRKKVNRKTEIISGMNHMYEDNDKDVVHGLKKGNFFFKTQEDKEPISENIEVSKELQIPALSTRDNENQCDYRTQNVLGLQKQITNMYPVQQNESKVNKKLRQKVNRKTEIISEVNHLDNDKSIEYTVKSHSLFLTQKDKEIIPGNLEDPSEFETPALSTKDSGNLYDSEIQNVLGVKHGHDMQPACQNDSKIGKKPRLNVCQKSEIIPETNQIYENDNKGVHDLEKDNFFSLTPKDKETISENLQVTNEFQTVDLLIKDNGNLCDYDTQNILELKKYVTDRKSAEQNESKINKLRNKVNWKTEIISEMNQIYEDNDKDAHVQESYTKDLDFKVNKSKQKLECQDIINKHYMEVNSNEKESCDQILDSYKVVKKRKKESSCKAKNILTKAKNKLASQLTESSQTSISLESDLKHITSEADSDPGNPVELCKTQKQSTTTLNKKDLPFVEEIKEGECQVKKVNKMTSKSKKRKTSIDPSPESHEVMERILDSVQGKSTVSEQADKENNLENEKMVKNKPDFYTKAFRSLSEIHSPNIQDSSFDSVREGLVPLSVSSGKNVIIKENFALECSPAFQVSDDEHEKMNKMKFKVNRRTQKSGIGDRPLQDLSNTSFVSNNTAESENKSEDLSSERTSRRRRCTPFYFKEPSLRDKMRR.

Residues 69 to 116 (KENSRRITTEKMLLQKEVEKLNFENTFLRLKLNNLNKKLIDIEALMNN) adopt a coiled-coil conformation. Disordered stretches follow at residues 161 to 202 (LTSN…STQD), 230 to 287 (DVPP…NLSA), 305 to 339 (LNCNNEINGHTNETNTEMQRNKQDLPGLSSESARE), and 381 to 447 (GIKK…GAED). Over residues 190–202 (SSGSTTQPLSTQD) the composition is skewed to polar residues. Residues 232 to 242 (PPRESHSHSDQ) show a composition bias toward basic and acidic residues. Polar residues predominate over residues 305 to 322 (LNCNNEINGHTNETNTEM). 2 stretches are compositionally biased toward basic and acidic residues: residues 389–410 (KTNEHGMKTFRKVKDSSSEKKR) and 425–446 (IGEKIENRTERSDVLDGKRGAE). Residues 452–476 (FNNEQLAQMNEQLAQVNELKKMTLQ) are a coiled coil. The interval 499–526 (EQEETYSLSQSSGKFHQESKFDKGQNSL) is disordered. Polar residues predominate over residues 503 to 512 (TYSLSQSSGK). The stretch at 603 to 626 (EQNESNINKLRKKVNRKTEIISGM) forms a coiled coil. Residues 1073 to 1083 (NKMTSKSKKRK) show a composition bias toward basic residues. The disordered stretch occupies residues 1073–1093 (NKMTSKSKKRKTSIDPSPESH). Serine 1144 is modified (phosphoserine). The segment at 1200–1265 (KVNRRTQKSG…EPSLRDKMRR (66 aa)) is disordered. Residues 1217-1230 (DLSNTSFVSNNTAE) show a composition bias toward polar residues. Residues 1231-1243 (SENKSEDLSSERT) show a composition bias toward basic and acidic residues.

This sequence belongs to the shugoshin family. Part of an astrin (SPAG5) -kinastrin (SKAP) complex containing KNSTRN, SPAG5, PLK1, DYNLL1 and SGO2. Interacts with CDCA8. Directly interacts with PPP2CA.

The protein localises to the nucleus. It is found in the chromosome. The protein resides in the centromere. It localises to the kinetochore. Functionally, cooperates with PPP2CA to protect centromeric cohesin from separase-mediated cleavage in oocytes specifically during meiosis I. Has a crucial role in protecting REC8 at centromeres from cleavage by separase. During meiosis, protects centromeric cohesion complexes until metaphase II/anaphase II transition, preventing premature release of meiosis-specific REC8 cohesin complexes from anaphase I centromeres. Is thus essential for an accurate gametogenesis. May act by targeting PPP2CA to centromeres, thus leading to cohesin dephosphorylation. Essential for recruiting KIF2C to the inner centromere and for correcting defective kinetochore attachments. Involved in centromeric enrichment of AUKRB in prometaphase. The sequence is that of Shugoshin 2 from Homo sapiens (Human).